A 958-amino-acid chain; its full sequence is MutS protein homolog 4 (958 aa).

2 disordered regions span residues 51-110 and 124-161; these read QEAA…SFGN and PVGTSSSSARDTTYPHTFRTPLSAGNPQRSGHKSWTPQ. A compositionally biased stretch (low complexity) spans 91–107; that stretch reads SSSSSSSPAPASAPGSS. Composition is skewed to polar residues over residues 124–138 and 146–161; these read PVGTSSSSARDTTYP and SAGNPQRSGHKSWTPQ. 702–709 serves as a coordination point for ATP; the sequence is GPNMSGKS.

The protein belongs to the DNA mismatch repair MutS family. As to quaternary structure, heterooligomer of MSH4 and MSH5. As to expression, predominantly expressed in testis.

The protein localises to the chromosome. Its function is as follows. Involved in meiotic recombination. Required for reciprocal recombination and proper segregation of homologous chromosomes at meiosis. The protein is MutS protein homolog 4 (Msh4) of Mus musculus (Mouse).